An 889-amino-acid polypeptide reads, in one-letter code: MKSAEIARRFLAFFEKNGHTVVPSASLIAEDPTLLLVNAGMVPFKPYFLGQRTPPYPRATSVQKCVRTIDIDEVGKTTRHASFFQMLGNFSFGDYFKEKAIPLAWELLTTSVADGGFGFDPERLWVTVYLDDDEAATIWREKVGLPEERIQRRGKADNFWSMGVPGPCGPCSEIYFDRGPEYGAEGGPVADEDRYLEVWNLVFMQFERGEGSGKEDYPILGELPSKNIDTGMGLERMAAILQGVDNIYETDTLGRILRRAAELTGTTYGENERADVSLRVIADHVRTATMLVADGVRPGNEKRGYVLRRILRRSIRNLRLLSGDESFHMHDLTAVAIDAMGDQYPELRADADKIHSIIDAEEKNFADTLRAGTTLFNRAVRRTKETGGTVFSGADAFQLHDTYGFPIDLTLEMAAEHGLKVDEETFHQLMQRQRETAKRDAQAKKLGNADISVYGNLLETGGPTEFLGYTDSESEARVLGIIVNGESTGAARKGDQVELVLDRTPFYAESGGQLADKGTITVDGRGVVDVEDVQKPIQGLFVHRGTVREGEVVVDDTVHAAIDTGRRASVSRSHSATHLIHSALRNTLGPSAGQAGSENQPGRLRFDFTSDKPLDATEIAQVEEEVNEVLARNIEVQYLETTLDEALRMGALAMFGEKYGNRVRVVDMTEYSRELCGGTHVAATGQLGLVKVLGESSVGSGVRRVEALVGLDALRRVSTESALVGQLSEQLKAPREELPQRIDSLVSRLRAAEKEIERLRAAQVLQAAGKLAESARDHGNSRVVTHRVEDGTTADDMRKLALDVRGRLGEDRPAVVAIAGVPSDRPVVVVAINKEAQQAGLKAGELVGVAARALGGGGGGRPDIAQGGGSDVTAIDTALRLVEQRVAGS.

4 residues coordinate Zn(2+): H574, H578, C676, and H680.

It belongs to the class-II aminoacyl-tRNA synthetase family. Zn(2+) serves as cofactor.

Its subcellular location is the cytoplasm. It carries out the reaction tRNA(Ala) + L-alanine + ATP = L-alanyl-tRNA(Ala) + AMP + diphosphate. In terms of biological role, catalyzes the attachment of alanine to tRNA(Ala) in a two-step reaction: alanine is first activated by ATP to form Ala-AMP and then transferred to the acceptor end of tRNA(Ala). Also edits incorrectly charged Ser-tRNA(Ala) and Gly-tRNA(Ala) via its editing domain. The protein is Alanine--tRNA ligase of Thermobifida fusca (strain YX).